A 290-amino-acid chain; its full sequence is Dehydrodolichyl diphosphate synthase CPT3 (290 aa).

The active site involves Asp42.

This sequence belongs to the UPP synthase family. The cofactor is Mg(2+). In terms of tissue distribution, expressed in leaf trichomes and stem trichomes. Expressed at low levels in young leaves, stems and old leaves.

The protein localises to the cytoplasm. It localises to the cytosol. It catalyses the reaction n isopentenyl diphosphate + (2E,6E)-farnesyl diphosphate = a di-trans,poly-cis-polyprenyl diphosphate + n diphosphate. Catalyzes cis-prenyl chain elongation to produce the polyprenyl backbone of dolichol, a glycosyl carrier-lipid required for the biosynthesis of several classes of glycoprotein. The protein is Dehydrodolichyl diphosphate synthase CPT3 of Solanum lycopersicum (Tomato).